The primary structure comprises 199 residues: Inner membrane-spanning protein YciB (199 aa).

The next 6 membrane-spanning stretches (helical) occupy residues 4–24 (FIDFIPLILFFIVYKLEPRIV), 36–56 (IFSATAVLILASLLVYGTLFL), 64–84 (GQWITLLACLVFGGMTLTFQS), 90–110 (WKAPVVNWLFALGFAASHFIG), 135–155 (LAWVAFFVFSGCANLFVAFTF), and 162–182 (FKVFGSLGMTVLFLVGQGVFL).

The protein belongs to the YciB family.

It is found in the cell inner membrane. In terms of biological role, plays a role in cell envelope biogenesis, maintenance of cell envelope integrity and membrane homeostasis. The sequence is that of Inner membrane-spanning protein YciB from Azotobacter vinelandii (strain DJ / ATCC BAA-1303).